A 293-amino-acid polypeptide reads, in one-letter code: Elongation factor Ts (293 aa).

An involved in Mg(2+) ion dislocation from EF-Tu region spans residues 81–84 (TDFV).

The protein belongs to the EF-Ts family.

It localises to the cytoplasm. Associates with the EF-Tu.GDP complex and induces the exchange of GDP to GTP. It remains bound to the aminoacyl-tRNA.EF-Tu.GTP complex up to the GTP hydrolysis stage on the ribosome. This is Elongation factor Ts from Methylococcus capsulatus (strain ATCC 33009 / NCIMB 11132 / Bath).